A 136-amino-acid chain; its full sequence is uncharacterized protein (136 aa).

This is an uncharacterized protein from Frog virus 3 (isolate Goorha) (FV-3).